The primary structure comprises 269 residues: 3-ketodihydrosphingosine reductase (269 aa).

Residues Gly10, Ser12, Ser13, Gly14, Lys36, and Asp50 each contribute to the NADPH site. A GXSXG motif is present at residues 10–14 (GASSG). Ser12 (nucleophile; for lipase activity) is an active-site residue. Ser128 acts as the Proton donor in catalysis. Catalysis depends on Tyr142, which acts as the Proton acceptor. Residues Tyr142 and Lys146 each contribute to the NADP(+) site. NADPH is bound by residues 142–146 (YSASK) and 175–177 (FNT). Residue Lys146 is part of the active site. Lys146 serves as the catalytic Lowers pKa of active site Tyr.

This sequence belongs to the short-chain dehydrogenases/reductases (SDR) family.

It catalyses the reaction sphinganine + NADP(+) = 3-oxosphinganine + NADPH + H(+). Its pathway is lipid metabolism; sphingolipid metabolism. Catalyzes the reduction of 3'-oxosphinganine (3-ketodihydrosphingosine/KDS) to sphinganine (dihydrosphingosine/DHS), the second step of de novo sphingolipid biosynthesis. This Bacteroides thetaiotaomicron (strain ATCC 29148 / DSM 2079 / JCM 5827 / CCUG 10774 / NCTC 10582 / VPI-5482 / E50) protein is 3-ketodihydrosphingosine reductase.